The sequence spans 950 residues: Inactive atromentin synthetase invA4 (950 aa).

An adenylation (A) domain region spans residues 37-460 (SRAVSQYPNH…SGRIKDTVVV (424 aa)). Residues 592–670 (APSTETEKTL…TLAKYVDSLV (79 aa)) form the Carrier domain. Positions 597-667 (TEKTLAGIYA…EIITLAKYVD (71 aa)) are thiolation and peptide carrier (T) domain. Ser-629 carries the post-translational modification O-(pantetheine 4'-phosphoryl)serine. Positions 693-797 (PIFMVHPGIG…GIIDMIPHHM (105 aa)) are thioesterase (TE) domain.

Belongs to the ATP-dependent AMP-binding enzyme family.

Its function is as follows. Inactive atromentin synthetase homolog. Does not accept 4-hydroxyphenylpyruvate (4-HPP) as substrate. The sequence is that of Inactive atromentin synthetase invA4 (invA4) from Paxillus involutus (Naked brimcap).